A 422-amino-acid polypeptide reads, in one-letter code: Phospho-N-acetylmuramoyl-pentapeptide-transferase (422 aa).

A run of 9 helical transmembrane segments spans residues 28 to 48 (LMAI…FINL), 71 to 91 (VGVP…PCLL), 95 to 115 (LHNI…TLGF), 136 to 156 (IIGQ…SPSV), 208 to 228 (AQAV…TAVS), 239 to 259 (GMAA…AYVS), 279 to 299 (LVIF…YNAF), 313 to 333 (IGGI…IPIL), and 399 to 419 (KITV…IITL).

It belongs to the glycosyltransferase 4 family. MraY subfamily. The cofactor is Mg(2+).

Its subcellular location is the cell inner membrane. It catalyses the reaction UDP-N-acetyl-alpha-D-muramoyl-L-alanyl-gamma-D-glutamyl-meso-2,6-diaminopimeloyl-D-alanyl-D-alanine + di-trans,octa-cis-undecaprenyl phosphate = di-trans,octa-cis-undecaprenyl diphospho-N-acetyl-alpha-D-muramoyl-L-alanyl-D-glutamyl-meso-2,6-diaminopimeloyl-D-alanyl-D-alanine + UMP. It participates in cell wall biogenesis; peptidoglycan biosynthesis. Functionally, catalyzes the initial step of the lipid cycle reactions in the biosynthesis of the cell wall peptidoglycan: transfers peptidoglycan precursor phospho-MurNAc-pentapeptide from UDP-MurNAc-pentapeptide onto the lipid carrier undecaprenyl phosphate, yielding undecaprenyl-pyrophosphoryl-MurNAc-pentapeptide, known as lipid I. The chain is Phospho-N-acetylmuramoyl-pentapeptide-transferase from Phocaeicola vulgatus (strain ATCC 8482 / DSM 1447 / JCM 5826 / CCUG 4940 / NBRC 14291 / NCTC 11154) (Bacteroides vulgatus).